A 363-amino-acid chain; its full sequence is UDP-N-acetylenolpyruvoylglucosamine reductase (363 aa).

In terms of domain architecture, FAD-binding PCMH-type spans Ile25–Leu201. Arg168 is a catalytic residue. Catalysis depends on Ser249, which acts as the Proton donor. Glu352 is an active-site residue.

It belongs to the MurB family. It depends on FAD as a cofactor.

The protein localises to the cytoplasm. The enzyme catalyses UDP-N-acetyl-alpha-D-muramate + NADP(+) = UDP-N-acetyl-3-O-(1-carboxyvinyl)-alpha-D-glucosamine + NADPH + H(+). Its pathway is cell wall biogenesis; peptidoglycan biosynthesis. In terms of biological role, cell wall formation. This Mycolicibacterium smegmatis (strain ATCC 700084 / mc(2)155) (Mycobacterium smegmatis) protein is UDP-N-acetylenolpyruvoylglucosamine reductase.